Reading from the N-terminus, the 450-residue chain is Salicylate synthase (450 aa).

The active-site Proton donor is the Glu-252. 270 to 271 serves as a coordination point for substrate; the sequence is GT. Glu-297 serves as a coordination point for Mg(2+). Substrate contacts are provided by residues Tyr-385, Arg-405, and 419 to 421; that span reads GAG. The Mg(2+) site is built by Glu-431 and Glu-434. Substrate is bound at residue Lys-438.

This sequence belongs to the anthranilate synthase component I family. Salicylate synthase subfamily. In terms of assembly, monomer. The cofactor is Mg(2+).

It catalyses the reaction chorismate = isochorismate. The catalysed reaction is isochorismate = salicylate + pyruvate. The enzyme catalyses chorismate = prephenate. The protein operates within siderophore biosynthesis; mycobactin biosynthesis. Functionally, involved in the incorporation of salicylate into the virulence-conferring salicylate-based siderophore mycobactin. Catalyzes the initial conversion of chorismate to yield the intermediate isochorismate (isochorismate synthase activity), and the subsequent elimination of the enolpyruvyl side chain in a lyase reaction to give salicylate (isochorismate pyruvate-lyase activity). In the absence of magnesium, MbtI displays a chorismate mutase activity and converts chorismate to prephenate. The chain is Salicylate synthase (mbtI) from Mycolicibacterium paratuberculosis (strain ATCC BAA-968 / K-10) (Mycobacterium paratuberculosis).